We begin with the raw amino-acid sequence, 87 residues long: U14-lycotoxin-Ls1a (87 aa).

The N-terminal stretch at 1–20 (MNSKVFAALLLLALSTCVLS) is a signal peptide. One can recognise a WAP domain in the interval 21 to 66 (EKYCPTPRNTSCKKMNIRNNCCRDSDCTSNAFCCAEPCGNFCHKAS). 5 disulfides stabilise this stretch: Cys24-Cys54, Cys32-Cys58, Cys41-Cys53, Cys42-Cys80, and Cys47-Cys62.

It belongs to the venom protein 11 family. 01 (wap-1) subfamily. Contains 5 disulfide bonds. Expressed by the venom gland.

It is found in the secreted. Functionally, has antibacterial activity. In Lycosa singoriensis (Wolf spider), this protein is U14-lycotoxin-Ls1a.